A 71-amino-acid polypeptide reads, in one-letter code: Protein SlyX homolog (71 aa).

The protein belongs to the SlyX family.

The protein is Protein SlyX homolog of Rhodopseudomonas palustris (strain BisB5).